Reading from the N-terminus, the 335-residue chain is Protein-arginine kinase (335 aa).

Residues Ile-20–Ile-243 enclose the Phosphagen kinase C-terminal domain. ATP-binding positions include Ser-23–Arg-27, His-81, Arg-114, Arg-165–Met-169, and Arg-196–Glu-201.

This sequence belongs to the ATP:guanido phosphotransferase family.

The catalysed reaction is L-arginyl-[protein] + ATP = N(omega)-phospho-L-arginyl-[protein] + ADP + H(+). Functionally, catalyzes the specific phosphorylation of arginine residues in proteins. This Staphylococcus haemolyticus (strain JCSC1435) protein is Protein-arginine kinase.